The chain runs to 101 residues: Ascorbate-specific PTS system EIIB component (101 aa).

The 94-residue stretch at 3-96 (VRILAVCGNG…KLLEVIKAHF (94 aa)) folds into the PTS EIIB type-2 domain. Cys9 functions as the Phosphocysteine intermediate in the catalytic mechanism. Cys9 carries the post-translational modification Phosphocysteine.

Its subcellular location is the cytoplasm. The enzyme catalyses N(pros)-phospho-L-histidyl-[protein] + L-ascorbate(out) = L-ascorbate 6-phosphate(in) + L-histidyl-[protein]. Functionally, the phosphoenolpyruvate-dependent sugar phosphotransferase system (sugar PTS), a major carbohydrate active transport system, catalyzes the phosphorylation of incoming sugar substrates concomitantly with their translocation across the cell membrane. The enzyme II UlaABC PTS system is involved in ascorbate transport. This chain is Ascorbate-specific PTS system EIIB component (ulaB), found in Shigella sonnei (strain Ss046).